Here is a 228-residue protein sequence, read N- to C-terminus: Sodium channel regulatory subunit beta-4 (228 aa).

Residues 1–30 (MPGARDQGAARARWLGIGLLGLFLLPVSLS) form the signal peptide. The 118-residue stretch at 31 to 148 (LEVSVGKATT…NDFQHQATIF (118 aa)) folds into the Ig-like C2-type domain. Over 31-162 (LEVSVGKATT…DKLEEVDNTV (132 aa)) the chain is Extracellular. Residues Asn45, Asn71, and Asn113 are each glycosylated (N-linked (GlcNAc...) asparagine). Cysteines 53 and 131 form a disulfide. A helical transmembrane segment spans residues 163-183 (TLIILGVVGGVIGLLIFILLV). At 184-228 (KKFIAFIIKKTQEKKKECLVSSSGNDNTENGLPGSKAEEKAPTKV) the chain is on the cytoplasmic side. The disordered stretch occupies residues 198–228 (KKECLVSSSGNDNTENGLPGSKAEEKAPTKV). Polar residues predominate over residues 203 to 213 (VSSSGNDNTEN). Residues 219–228 (KAEEKAPTKV) show a composition bias toward basic and acidic residues.

Belongs to the sodium channel auxiliary subunit SCN4B (TC 8.A.17) family. As to quaternary structure, a voltage-gated sodium (Nav) channel consists of an ion-conducting pore-forming alpha subunit functional on its own that is regulated by one or more beta subunits. The beta subunit SCN4B is disulfide-linked to the pore-forming alpha subunit. Interacts with SCN1A; regulatory subunit of SCN1A/Nav1.1. Interacts with SCN2A; regulatory subunit of SCN2A/Nav1.2. In terms of processing, contains an interchain disulfide bond with SCN2A.

It localises to the cell membrane. Its function is as follows. Regulatory subunit of multiple voltage-gated sodium (Nav) channels directly mediating the depolarization of excitable membranes. Navs, also called VGSCs (voltage-gated sodium channels) or VDSCs (voltage-dependent sodium channels), operate by switching between closed and open conformations depending on the voltage difference across the membrane. In the open conformation they allow Na(+) ions to selectively pass through the pore, along their electrochemical gradient. The influx of Na+ ions provokes membrane depolarization, initiating the propagation of electrical signals throughout cells and tissues. The accessory beta subunits participate in localization and functional modulation of the Nav channels. Modulates the activity of SCN1A/Nav1.1. Modulates the activity of SCN2A/Nav1.2. In Bos taurus (Bovine), this protein is Sodium channel regulatory subunit beta-4.